Reading from the N-terminus, the 299-residue chain is GTPase Era (299 aa).

The Era-type G domain occupies 4-171 (KSGFVAILGR…VDILSENLEE (168 aa)). Positions 12-19 (GRPNVGKS) are G1. 12 to 19 (GRPNVGKS) provides a ligand contact to GTP. The G2 stretch occupies residues 38 to 42 (QTTRN). The G3 stretch occupies residues 59–62 (DTPG). GTP contacts are provided by residues 59-63 (DTPGI) and 121-124 (NKID). The segment at 121–124 (NKID) is G4. The segment at 150–152 (ISA) is G5. A KH type-2 domain is found at 202–280 (TREEIPHSVA…FLETWVKVKK (79 aa)).

The protein belongs to the TRAFAC class TrmE-Era-EngA-EngB-Septin-like GTPase superfamily. Era GTPase family. As to quaternary structure, monomer.

The protein localises to the cytoplasm. It is found in the cell membrane. Its function is as follows. An essential GTPase that binds both GDP and GTP, with rapid nucleotide exchange. Plays a role in 16S rRNA processing and 30S ribosomal subunit biogenesis and possibly also in cell cycle regulation and energy metabolism. This chain is GTPase Era, found in Streptococcus gordonii (strain Challis / ATCC 35105 / BCRC 15272 / CH1 / DL1 / V288).